A 417-amino-acid polypeptide reads, in one-letter code: Lysosome-associated membrane glycoprotein 1 (417 aa).

The signal sequence occupies residues 1 to 28 (MAAPGSARRPLLLLLLLLLLGLMHCASA). A first lumenal domain region spans residues 29-194 (AMFMVKNGNG…SRGETRCEQD (166 aa)). Over 29-382 (AMFMVKNGNG…EECLLDENSM (354 aa)) the chain is Lumenal. N-linked (GlcNAc...) asparagine glycans are attached at residues Asn-37 and Asn-45. An intrachain disulfide couples Cys-41 to Cys-80. The N-linked (GlcNAc...) (polylactosaminoglycan) asparagine glycan is linked to Asn-62. 4 N-linked (GlcNAc...) asparagine glycosylation sites follow: Asn-76, Asn-84, Asn-103, and Asn-107. Asn-121 and Asn-130 each carry an N-linked (GlcNAc...) (polylactosaminoglycan) asparagine glycan. Cys-155 and Cys-191 are joined by a disulfide. Asn-165 and Asn-181 each carry an N-linked (GlcNAc...) asparagine glycan. Residues 184–221 (FSRGETRCEQDRPSPTTAPPAPPSPSPSPVPKSPSVDK) form a disordered region. The hinge stretch occupies residues 195 to 227 (RPSPTTAPPAPPSPSPSPVPKSPSVDKYNVSGT). A glycan (O-linked (GalNAc...) serine; partial) is linked at Ser-197. Thr-199 and Thr-200 each carry an O-linked (GalNAc...) threonine glycan. The span at 199 to 215 (TTAPPAPPSPSPSPVPK) shows a compositional bias: pro residues. O-linked (GalNAc...) serine glycosylation is found at Ser-207, Ser-209, and Ser-211. 2 N-linked (GlcNAc...) (polylactosaminoglycan) asparagine glycosylation sites follow: Asn-223 and Asn-228. A second lumenal domain region spans residues 228–382 (NGTCLLASMG…EECLLDENSM (155 aa)). A disulfide bond links Cys-231 and Cys-269. N-linked (GlcNAc...) asparagine glycosylation is found at Asn-241, Asn-249, Asn-261, Asn-293, and Asn-322. Cys-338 and Cys-375 form a disulfide bridge. A helical membrane pass occupies residues 383–410 (LIPIAVGGALAGLVLIVLIAYLVGRKRS). The Cytoplasmic portion of the chain corresponds to 411-417 (HAGYQTI).

It belongs to the LAMP family. Interacts with ABCB9; this interaction strongly stabilizes ABCB9 and protects ABCB9 against lysosomal degradation. Interacts with FURIN. Interacts with TMEM175; inhibiting the proton channel activity of TMEM175. In terms of assembly, (Microbial infection) Interacts with Lassa virus protein glycoprotein. As to quaternary structure, (Microbial infection) Interacts with mumps virus protein F; this interaction promotes protein F cleavage by FURIN. O- and N-glycosylated; some of the 18 N-linked glycans are polylactosaminoglycans. Post-translationally, (Microbial infection) The glycosylation of Asn-76 is essential for Lassa virus entry into cells.

The protein resides in the lysosome membrane. It is found in the endosome membrane. Its subcellular location is the late endosome membrane. The protein localises to the cell membrane. It localises to the cytolytic granule membrane. Functionally, lysosomal membrane glycoprotein which plays an important role in lysosome biogenesis, lysosomal pH regulation, autophagy and cholesterol homeostasis. Acts as an important regulator of lysosomal lumen pH regulation by acting as a direct inhibitor of the proton channel TMEM175, facilitating lysosomal acidification for optimal hydrolase activity. Also plays an important role in NK-cells cytotoxicity. Mechanistically, participates in cytotoxic granule movement to the cell surface and perforin trafficking to the lytic granule. In addition, protects NK-cells from degranulation-associated damage induced by their own cytotoxic granule content. Presents carbohydrate ligands to selectins. (Microbial infection) Acts as a receptor for Lassa virus glycoprotein. Also promotes fusion of the virus with host membrane in less acidic endosomes. In terms of biological role, (Microbial infection) Supports the FURIN-mediated cleavage of mumps virus fusion protein F by interacting with both FURIN and the unprocessed form but not the processed form of the viral protein F. The chain is Lysosome-associated membrane glycoprotein 1 from Homo sapiens (Human).